Consider the following 60-residue polypeptide: Large ribosomal subunit protein bL33 (60 aa).

It belongs to the bacterial ribosomal protein bL33 family.

This is Large ribosomal subunit protein bL33 from Flavobacterium johnsoniae (strain ATCC 17061 / DSM 2064 / JCM 8514 / BCRC 14874 / CCUG 350202 / NBRC 14942 / NCIMB 11054 / UW101) (Cytophaga johnsonae).